A 694-amino-acid chain; its full sequence is Frizzled-2 (694 aa).

A signal peptide spans 1-22 (MRHNRLKVLILGLVLLLTSCRA). At 23–315 (DGPLHSADHG…GPFFSNDEKD (293 aa)) the chain is on the extracellular side. Positions 59–180 (DPNLRCEEIT…GDPDNLCMEQ (122 aa)) constitute an FZ domain. Cystine bridges form between Cys64–Cys125, Cys72–Cys118, Cys109–Cys147, Cys136–Cys177, and Cys140–Cys164. An N-linked (GlcNAc...) asparagine glycan is attached at Asn78. The segment at 175–253 (NLCMEQPSYT…QGEKASGKEC (79 aa)) is disordered. Gly residues predominate over residues 187-224 (GSGGSSGGSGGSGSGSGSGGKRKQGGSGSGGSGAGGSS). Asn288 is a glycosylation site (N-linked (GlcNAc...) asparagine). The chain crosses the membrane as a helical span at residues 316 to 336 (FAGLWIALWSGLCFCSTLMTL). Topologically, residues 337-352 (TTFIIDTERFKYPERP) are cytoplasmic. The helical transmembrane segment at 353–373 (IVFLSACYFMVAVGYLSRNFL) threads the bilayer. Over 374-397 (QNEEIACDGLLLRESSTGPHSCTL) the chain is Extracellular. Residues 398–418 (VFLLTYFFGMASSIWWVILSF) form a helical membrane-spanning segment. Residues 419–439 (TWFLAAGLKWGNEAITKHSQY) are Cytoplasmic-facing. Residues 440 to 460 (FHLAAWLIPTVQSVAVLLLSA) traverse the membrane as a helical segment. The Extracellular segment spans residues 461–482 (VDGDPILGICYVGNLNPDHLKT). The helical transmembrane segment at 483-503 (FVLAPLFVYLVIGTTFLMAGF) threads the bilayer. Over 504–534 (VSLFRIRSVIKQQGGVGAGVKADKLEKLMIR) the chain is Cytoplasmic. Residues 535-555 (IGIFSVLYTVPATIVIGCYLY) traverse the membrane as a helical segment. Residues 556–584 (EAAYFEDWIKALACPCAQVKGPGKKPLYS) lie on the Extracellular side of the membrane. A helical transmembrane segment spans residues 585–605 (VLMLKYFMALAVGITSGVWIW). Topologically, residues 606–694 (SGKTLESWRR…VLKQPAASHV (89 aa)) are cytoplasmic. The Lys-Thr-X-X-X-Trp motif, mediates interaction with the PDZ domain of Dvl family members signature appears at 608 to 613 (KTLESW). A PDZ-binding motif is present at residues 692–694 (SHV).

Belongs to the G-protein coupled receptor Fz/Smo family. In terms of assembly, interacts with ATP6AP2.

The protein localises to the cell membrane. Its function is as follows. Receptor for Wnt proteins. Most of frizzled receptors are coupled to the beta-catenin canonical signaling pathway, which leads to the activation of disheveled proteins, inhibition of GSK-3 kinase, nuclear accumulation of beta-catenin and activation of Wnt target genes. A second signaling pathway involving PKC and calcium fluxes has been seen for some family members, but it is not yet clear if it represents a distinct pathway or if it can be integrated in the canonical pathway, as PKC seems to be required for Wnt-mediated inactivation of GSK-3 kinase. Both pathways seem to involve interactions with G-proteins. Required to coordinate the cytoskeletons of epidermal cells to produce a parallel array of cuticular hairs and bristles. The polypeptide is Frizzled-2 (fz2) (Drosophila melanogaster (Fruit fly)).